A 409-amino-acid chain; its full sequence is Patellin-6 (409 aa).

The region spanning Glu-116–Asp-294 is the CRAL-TRIO domain. A GOLD domain is found at Ala-270–Lys-404.

The protein belongs to the patellin family.

It is found in the membrane. The protein localises to the cytoplasm. In terms of biological role, carrier protein that may be involved in membrane-trafficking events associated with cell-plate formation during cytokinesis. Binds to some hydrophobic molecules such as phosphoinositides and promotes their transfer between the different cellular sites. The sequence is that of Patellin-6 (PATL6) from Arabidopsis thaliana (Mouse-ear cress).